The sequence spans 79 residues: D-alanyl carrier protein (79 aa).

Residues 1-77 (MDTKQGVLDI…KIVAKVESLE (77 aa)) enclose the Carrier domain. Serine 35 bears the O-(pantetheine 4'-phosphoryl)serine mark.

The protein belongs to the DltC family. In terms of processing, 4'-phosphopantetheine is transferred from CoA to a specific serine of apo-DCP.

It localises to the cytoplasm. Its pathway is cell wall biogenesis; lipoteichoic acid biosynthesis. In terms of biological role, carrier protein involved in the D-alanylation of lipoteichoic acid (LTA). The loading of thioester-linked D-alanine onto DltC is catalyzed by D-alanine--D-alanyl carrier protein ligase DltA. The DltC-carried D-alanyl group is further transferred to cell membrane phosphatidylglycerol (PG) by forming an ester bond, probably catalyzed by DltD. D-alanylation of LTA plays an important role in modulating the properties of the cell wall in Gram-positive bacteria, influencing the net charge of the cell wall. This chain is D-alanyl carrier protein, found in Lactobacillus helveticus (strain DPC 4571).